We begin with the raw amino-acid sequence, 128 residues long: Type III secretion protein HrcQb (128 aa).

Residues 1-21 (MSTEDLYQEDVEMLDDYEDPS) show a composition bias toward acidic residues. The interval 1 to 57 (MSTEDLYQEDVEMLDDYEDPSTEQHWSEEDGEPSGYATAEPDDHAAQEEQDEPPALD) is disordered. Residues 50–128 (QDEPPALDSL…LQITRLVTRS (79 aa)) are hrcQb-C. The segment at 78-81 (RRLD) is dimer-dimer interface.

Belongs to the FliN/MopA/SpaO family. Homotetramer. The four monomers assemble into two tightly bound homodimers. Interacts with HrcQa.

Its subcellular location is the cytoplasm. Its function is as follows. Component of the type III secretion system, which is required for effector protein delivery, parasitism, and pathogenicity. Probably participates in the formation of a C-ring-like assembly along with HrcQa. The sequence is that of Type III secretion protein HrcQb (hrcQb) from Pseudomonas savastanoi pv. phaseolicola (Pseudomonas syringae pv. phaseolicola).